We begin with the raw amino-acid sequence, 450 residues long: ADP-specific phosphofructokinase (450 aa).

Positions Met1 to Arg449 constitute an ADPK domain. 3 residues coordinate Mg(2+): Glu260, Glu290, and Asp433. The Proton acceptor role is filled by Asp433.

Belongs to the carbohydrate kinase PfkC family. Mg(2+) serves as cofactor.

The protein localises to the cytoplasm. The enzyme catalyses beta-D-fructose 6-phosphate + ADP = beta-D-fructose 1,6-bisphosphate + AMP + H(+). The protein operates within carbohydrate degradation; glycolysis. In terms of biological role, catalyzes the phosphorylation of fructose 6-phosphate to fructose 1,6-bisphosphate using ADP as the phosphate donor. The protein is ADP-specific phosphofructokinase of Pyrococcus horikoshii (strain ATCC 700860 / DSM 12428 / JCM 9974 / NBRC 100139 / OT-3).